Consider the following 267-residue polypeptide: NAD kinase 2 (267 aa).

The active-site Proton acceptor is the D52. Residues 52–53 (DG), 124–125 (NE), R151, D153, 164–169 (TGYNKS), and A188 each bind NAD(+).

This sequence belongs to the NAD kinase family. A divalent metal cation is required as a cofactor.

It is found in the cytoplasm. It carries out the reaction NAD(+) + ATP = ADP + NADP(+) + H(+). In terms of biological role, involved in the regulation of the intracellular balance of NAD and NADP, and is a key enzyme in the biosynthesis of NADP. Catalyzes specifically the phosphorylation on 2'-hydroxyl of the adenosine moiety of NAD to yield NADP. The protein is NAD kinase 2 of Geobacillus kaustophilus (strain HTA426).